Reading from the N-terminus, the 91-residue chain is DNA-directed RNA polymerase subunit omega (91 aa).

Belongs to the RNA polymerase subunit omega family. In terms of assembly, the RNAP catalytic core consists of 2 alpha, 1 beta, 1 beta' and 1 omega subunit. When a sigma factor is associated with the core the holoenzyme is formed, which can initiate transcription.

It carries out the reaction RNA(n) + a ribonucleoside 5'-triphosphate = RNA(n+1) + diphosphate. Its function is as follows. Promotes RNA polymerase assembly. Latches the N- and C-terminal regions of the beta' subunit thereby facilitating its interaction with the beta and alpha subunits. The chain is DNA-directed RNA polymerase subunit omega from Erwinia tasmaniensis (strain DSM 17950 / CFBP 7177 / CIP 109463 / NCPPB 4357 / Et1/99).